Reading from the N-terminus, the 119-residue chain is Beta-2-microglobulin (119 aa).

The N-terminal stretch at 1–20 is a signal peptide; sequence MARFVVVPLLVLLSLFGLEA. The Ig-like C1-type domain maps to 25 to 114; it reads PKIQVYSRYP…VTFSTPKTVK (90 aa). C45 and C100 are joined by a disulfide.

This sequence belongs to the beta-2-microglobulin family. Heterodimer of an alpha chain and a beta chain. Beta-2-microglobulin is the beta-chain of major histocompatibility complex class I molecules.

Its subcellular location is the secreted. Its function is as follows. Component of the class I major histocompatibility complex (MHC). Involved in the presentation of peptide antigens to the immune system. The protein is Beta-2-microglobulin (B2M) of Saguinus bicolor bicolor (Pied bare-faced tamarin).